The sequence spans 105 residues: Pyrimidine/purine nucleoside phosphorylase (105 aa).

Belongs to the nucleoside phosphorylase PpnP family.

It catalyses the reaction a purine D-ribonucleoside + phosphate = a purine nucleobase + alpha-D-ribose 1-phosphate. The enzyme catalyses adenosine + phosphate = alpha-D-ribose 1-phosphate + adenine. It carries out the reaction cytidine + phosphate = cytosine + alpha-D-ribose 1-phosphate. The catalysed reaction is guanosine + phosphate = alpha-D-ribose 1-phosphate + guanine. It catalyses the reaction inosine + phosphate = alpha-D-ribose 1-phosphate + hypoxanthine. The enzyme catalyses thymidine + phosphate = 2-deoxy-alpha-D-ribose 1-phosphate + thymine. It carries out the reaction uridine + phosphate = alpha-D-ribose 1-phosphate + uracil. The catalysed reaction is xanthosine + phosphate = alpha-D-ribose 1-phosphate + xanthine. In terms of biological role, catalyzes the phosphorolysis of diverse nucleosides, yielding D-ribose 1-phosphate and the respective free bases. Can use uridine, adenosine, guanosine, cytidine, thymidine, inosine and xanthosine as substrates. Also catalyzes the reverse reactions. This Wolinella succinogenes (strain ATCC 29543 / DSM 1740 / CCUG 13145 / JCM 31913 / LMG 7466 / NCTC 11488 / FDC 602W) (Vibrio succinogenes) protein is Pyrimidine/purine nucleoside phosphorylase.